Reading from the N-terminus, the 406-residue chain is Cysteine desulfurase (406 aa).

Residue Lys-226 is modified to N6-(pyridoxal phosphate)lysine. The active-site Cysteine persulfide intermediate is the Cys-364.

Belongs to the class-V pyridoxal-phosphate-dependent aminotransferase family. Csd subfamily. As to quaternary structure, homodimer. Interacts with SufE and the SufBCD complex composed of SufB, SufC and SufD. The interaction with SufE is required to mediate the direct transfer of the sulfur atom from the S-sulfanylcysteine. Pyridoxal 5'-phosphate serves as cofactor.

Its subcellular location is the cytoplasm. It carries out the reaction (sulfur carrier)-H + L-cysteine = (sulfur carrier)-SH + L-alanine. It catalyses the reaction L-selenocysteine + AH2 = hydrogenselenide + L-alanine + A + H(+). It participates in cofactor biosynthesis; iron-sulfur cluster biosynthesis. Cysteine desulfurases mobilize the sulfur from L-cysteine to yield L-alanine, an essential step in sulfur metabolism for biosynthesis of a variety of sulfur-containing biomolecules. Component of the suf operon, which is activated and required under specific conditions such as oxidative stress and iron limitation. Acts as a potent selenocysteine lyase in vitro, that mobilizes selenium from L-selenocysteine. Selenocysteine lyase activity is however unsure in vivo. The chain is Cysteine desulfurase from Escherichia coli (strain K12 / MC4100 / BW2952).